Here is a 668-residue protein sequence, read N- to C-terminus: Threonine--tRNA ligase (668 aa).

The 64-residue stretch at 1–64 (MSQSVSLTFP…TDGKIEIITR (64 aa)) folds into the TGS domain. The interval 245–553 (DHRKLGREMD…LIENFAGHMP (309 aa)) is catalytic. Residues Cys347, His398, and His530 each contribute to the Zn(2+) site.

It belongs to the class-II aminoacyl-tRNA synthetase family. In terms of assembly, homodimer. It depends on Zn(2+) as a cofactor.

The protein localises to the cytoplasm. The catalysed reaction is tRNA(Thr) + L-threonine + ATP = L-threonyl-tRNA(Thr) + AMP + diphosphate + H(+). Functionally, catalyzes the attachment of threonine to tRNA(Thr) in a two-step reaction: L-threonine is first activated by ATP to form Thr-AMP and then transferred to the acceptor end of tRNA(Thr). Also edits incorrectly charged L-seryl-tRNA(Thr). The polypeptide is Threonine--tRNA ligase (Rhizobium etli (strain ATCC 51251 / DSM 11541 / JCM 21823 / NBRC 15573 / CFN 42)).